The sequence spans 444 residues: Inward rectifier potassium channel 4 (444 aa).

Over 1–55 (MHGHNRNGQAHVPRRKRRNRFVKKNGQCNVYFANLSNKSQRYMADIFTTCVDTRW) the chain is Cytoplasmic. The helical transmembrane segment at 56–80 (RYMLMLFSAAFLVSWLFFGLLFWCI) threads the bilayer. Residues 81 to 119 (AFFHGDLEASPSVPAAGAPGGNGGAAPAAPKPCIMHVNG) lie on the Extracellular side of the membrane. Positions 120-131 (FLGAFLFSVETQ) form an intramembrane region, helical; Pore-forming. The segment at residues 132–138 (TTIGYGF) is an intramembrane region (pore-forming). A Selectivity filter motif is present at residues 133–138 (TIGYGF). Topologically, residues 139–147 (RCVTEECPL) are extracellular. Residues 148–169 (AVIAVVVQSIVGCVIDSFMIGT) traverse the membrane as a helical segment. Residues 170-444 (IMAKMARPKK…NISYRRESAI (275 aa)) are Cytoplasmic-facing. Residues 442–444 (SAI) carry the PDZ-binding motif.

It belongs to the inward rectifier-type potassium channel (TC 1.A.2.1) family. KCNJ4 subfamily. In terms of assembly, homomultimeric and heteromultimeric association with KCNJ2 and KCNJ12. Interacts with DLG2 and DLG4. Associates, via its PDZ-recognition domain, with a complex containing LIN7A, LIN7B, LIN7C, DLG1, CASK and APBA1. Interacts with TAX1BP3. TAX1BP3 competes with LIN7 family members for KCNJ4 binding.

It localises to the cell membrane. Its subcellular location is the postsynaptic cell membrane. The protein resides in the cytoplasmic vesicle membrane. It carries out the reaction K(+)(in) = K(+)(out). Functionally, inward rectifier potassium channels are characterized by a greater tendency to allow potassium to flow into the cell rather than out of it. Their voltage dependence is regulated by the concentration of extracellular potassium; as external potassium is raised, the voltage range of the channel opening shifts to more positive voltages. The inward rectification is mainly due to the blockage of outward current by internal magnesium. Can be blocked by extracellular barium and cesium. The polypeptide is Inward rectifier potassium channel 4 (KCNJ4) (Mesocricetus auratus (Golden hamster)).